The primary structure comprises 365 residues: tRNA 2-selenouridine synthase (365 aa).

The Rhodanese domain maps to 16–138 (FLLKTPLIDL…LRRYLINVID (123 aa)). Cysteine 98 serves as the catalytic S-selanylcysteine intermediate.

Belongs to the SelU family. Monomer.

It catalyses the reaction 5-methylaminomethyl-2-thiouridine(34) in tRNA + selenophosphate + (2E)-geranyl diphosphate + H2O + H(+) = 5-methylaminomethyl-2-selenouridine(34) in tRNA + (2E)-thiogeraniol + phosphate + diphosphate. The catalysed reaction is 5-methylaminomethyl-2-thiouridine(34) in tRNA + (2E)-geranyl diphosphate = 5-methylaminomethyl-S-(2E)-geranyl-thiouridine(34) in tRNA + diphosphate. It carries out the reaction 5-methylaminomethyl-S-(2E)-geranyl-thiouridine(34) in tRNA + selenophosphate + H(+) = 5-methylaminomethyl-2-(Se-phospho)selenouridine(34) in tRNA + (2E)-thiogeraniol. The enzyme catalyses 5-methylaminomethyl-2-(Se-phospho)selenouridine(34) in tRNA + H2O = 5-methylaminomethyl-2-selenouridine(34) in tRNA + phosphate. In terms of biological role, involved in the post-transcriptional modification of the uridine at the wobble position (U34) of tRNA(Lys), tRNA(Glu) and tRNA(Gln). Catalyzes the conversion of 2-thiouridine (S2U-RNA) to 2-selenouridine (Se2U-RNA). Acts in a two-step process involving geranylation of 2-thiouridine (S2U) to S-geranyl-2-thiouridine (geS2U) and subsequent selenation of the latter derivative to 2-selenouridine (Se2U) in the tRNA chain. The protein is tRNA 2-selenouridine synthase of Psychromonas ingrahamii (strain DSM 17664 / CCUG 51855 / 37).